A 658-amino-acid chain; its full sequence is Glycogen debranching enzyme (658 aa).

Asp-336 acts as the Nucleophile in catalysis. Residue Glu-371 is the Proton donor of the active site. Positions 460-484 (ANGEENRDGSNNNHSNNHGKEGLGG) are disordered.

This sequence belongs to the glycosyl hydrolase 13 family.

The catalysed reaction is Hydrolysis of (1-&gt;6)-alpha-D-glucosidic linkages to branches with degrees of polymerization of three or four glucose residues in limit dextrin.. It functions in the pathway glycan degradation; glycogen degradation. Functionally, removes maltotriose and maltotetraose chains that are attached by 1,6-alpha-linkage to the limit dextrin main chain, generating a debranched limit dextrin. In Escherichia fergusonii (strain ATCC 35469 / DSM 13698 / CCUG 18766 / IAM 14443 / JCM 21226 / LMG 7866 / NBRC 102419 / NCTC 12128 / CDC 0568-73), this protein is Glycogen debranching enzyme.